Reading from the N-terminus, the 227-residue chain is Probable septum site-determining protein MinC (227 aa).

The protein belongs to the MinC family. Interacts with MinD and FtsZ.

In terms of biological role, cell division inhibitor that blocks the formation of polar Z ring septums. Rapidly oscillates between the poles of the cell to destabilize FtsZ filaments that have formed before they mature into polar Z rings. Prevents FtsZ polymerization. The protein is Probable septum site-determining protein MinC of Bacillus pumilus (strain SAFR-032).